A 919-amino-acid polypeptide reads, in one-letter code: Phosphoenolpyruvate carboxylase (919 aa).

Active-site residues include histidine 138 and lysine 579.

It belongs to the PEPCase type 1 family. Mg(2+) serves as cofactor.

It catalyses the reaction oxaloacetate + phosphate = phosphoenolpyruvate + hydrogencarbonate. With respect to regulation, activity not stimulated by acetyl-CoA in the absence of any allosteric inhibitor, while the corresponding protein from E.coli is strongly stimulated. In terms of biological role, forms oxaloacetate, a four-carbon dicarboxylic acid source for the tricarboxylic acid cycle. This Corynebacterium glutamicum (strain ATCC 13032 / DSM 20300 / JCM 1318 / BCRC 11384 / CCUG 27702 / LMG 3730 / NBRC 12168 / NCIMB 10025 / NRRL B-2784 / 534) protein is Phosphoenolpyruvate carboxylase (ppc).